Consider the following 82-residue polypeptide: MAHKKGASSSRNGRDSNAKRLGVKRFAGQVVSAGEILVRQRGTRFHPGTNVRRGDDDTLFALASGRVRFGRSGKRRAVSVDT.

Residues 1–21 form a disordered region; that stretch reads MAHKKGASSSRNGRDSNAKRL.

This sequence belongs to the bacterial ribosomal protein bL27 family.

The polypeptide is Large ribosomal subunit protein bL27 (Tropheryma whipplei (strain Twist) (Whipple's bacillus)).